Here is a 311-residue protein sequence, read N- to C-terminus: tRNA pseudouridine synthase B (311 aa).

H43 is a binding site for substrate. D48 acts as the Nucleophile in catalysis. Substrate is bound by residues Y76, Y179, and L200.

This sequence belongs to the pseudouridine synthase TruB family. Type 1 subfamily.

The catalysed reaction is uridine(55) in tRNA = pseudouridine(55) in tRNA. In terms of biological role, responsible for synthesis of pseudouridine from uracil-55 in the psi GC loop of transfer RNAs. This chain is tRNA pseudouridine synthase B, found in Sodalis glossinidius (strain morsitans).